Here is a 211-residue protein sequence, read N- to C-terminus: tRNA (guanine-N(7)-)-methyltransferase (211 aa).

Positions 43, 68, 95, and 117 each coordinate S-adenosyl-L-methionine. Position 121 (Lys121) interacts with substrate. An interaction with RNA region spans residues 123-128 (RHNKRR). Substrate-binding positions include Asp153 and 190 to 193 (TEYE).

This sequence belongs to the class I-like SAM-binding methyltransferase superfamily. TrmB family.

It carries out the reaction guanosine(46) in tRNA + S-adenosyl-L-methionine = N(7)-methylguanosine(46) in tRNA + S-adenosyl-L-homocysteine. Its pathway is tRNA modification; N(7)-methylguanine-tRNA biosynthesis. Catalyzes the formation of N(7)-methylguanine at position 46 (m7G46) in tRNA. The chain is tRNA (guanine-N(7)-)-methyltransferase from Clostridium tetani (strain Massachusetts / E88).